Consider the following 875-residue polypeptide: Valine--tRNA ligase (875 aa).

Positions 45 to 55 match the 'HIGH' region motif; the sequence is PNVTGVLHMGH. The 'KMSKS' region motif lies at 524-528; it reads KMSKS. Lys-527 contacts ATP. Residues 803–837 are a coiled coil; it reads VKLLIDKTKELIRLEKQLEKYKMLKISVSKKLENE.

The protein belongs to the class-I aminoacyl-tRNA synthetase family. ValS type 1 subfamily. As to quaternary structure, monomer.

Its subcellular location is the cytoplasm. The enzyme catalyses tRNA(Val) + L-valine + ATP = L-valyl-tRNA(Val) + AMP + diphosphate. Catalyzes the attachment of valine to tRNA(Val). As ValRS can inadvertently accommodate and process structurally similar amino acids such as threonine, to avoid such errors, it has a 'posttransfer' editing activity that hydrolyzes mischarged Thr-tRNA(Val) in a tRNA-dependent manner. In Borrelia garinii subsp. bavariensis (strain ATCC BAA-2496 / DSM 23469 / PBi) (Borreliella bavariensis), this protein is Valine--tRNA ligase.